Reading from the N-terminus, the 240-residue chain is Ribonuclease HII (240 aa).

The RNase H type-2 domain occupies 33 to 222; the sequence is GPVAGVDEVG…VRRIVTRSNT (190 aa). A divalent metal cation contacts are provided by Asp-39, Glu-40, and Asp-131.

The protein belongs to the RNase HII family. The cofactor is Mn(2+). Mg(2+) is required as a cofactor.

Its subcellular location is the cytoplasm. The catalysed reaction is Endonucleolytic cleavage to 5'-phosphomonoester.. Functionally, endonuclease that specifically degrades the RNA of RNA-DNA hybrids. The protein is Ribonuclease HII of Mycobacterium leprae (strain Br4923).